Consider the following 864-residue polypeptide: Alanine--tRNA ligase (864 aa).

4 residues coordinate Zn(2+): H534, H538, C639, and H643.

The protein belongs to the class-II aminoacyl-tRNA synthetase family. Requires Zn(2+) as cofactor.

It is found in the cytoplasm. The catalysed reaction is tRNA(Ala) + L-alanine + ATP = L-alanyl-tRNA(Ala) + AMP + diphosphate. Its function is as follows. Catalyzes the attachment of alanine to tRNA(Ala) in a two-step reaction: alanine is first activated by ATP to form Ala-AMP and then transferred to the acceptor end of tRNA(Ala). Also edits incorrectly charged Ser-tRNA(Ala) and Gly-tRNA(Ala) via its editing domain. The protein is Alanine--tRNA ligase of Aster yellows witches'-broom phytoplasma (strain AYWB).